We begin with the raw amino-acid sequence, 310 residues long: Protoheme IX farnesyltransferase 2 (310 aa).

Transmembrane regions (helical) follow at residues 25–45, 49–69, 98–118, 121–141, 145–165, 176–196, 222–242, 245–265, and 277–297; these read PGIIFGNLISVAGGFLLAAKG, LVLMLASLVGLSLVVASGCAI, HVLLFGIAIGVLGFGILALFT, LALLFAAIGYVVYVGIYSLYM, SVYGTLVGSFSGAVPPVVGYC, VILLLMFSLWQMPHSYAIAIF, IVLYIAVFALVSTMLPLAGYT, AFMAVTCATSLWWLTMALKGY, and QVFGFSIITITALSVTMALDF.

It belongs to the UbiA prenyltransferase family. Protoheme IX farnesyltransferase subfamily.

It is found in the cell inner membrane. The enzyme catalyses heme b + (2E,6E)-farnesyl diphosphate + H2O = Fe(II)-heme o + diphosphate. Its pathway is porphyrin-containing compound metabolism; heme O biosynthesis; heme O from protoheme: step 1/1. In terms of biological role, converts heme B (protoheme IX) to heme O by substitution of the vinyl group on carbon 2 of heme B porphyrin ring with a hydroxyethyl farnesyl side group. In Shewanella sp. (strain MR-7), this protein is Protoheme IX farnesyltransferase 2.